The following is a 235-amino-acid chain: Small ribosomal subunit protein eS4 (235 aa).

The S4 RNA-binding domain maps to 37–100; sequence LPLGIIIRDI…NETYRMFQDE (64 aa).

It belongs to the eukaryotic ribosomal protein eS4 family.

This is Small ribosomal subunit protein eS4 from Methanosarcina barkeri (strain Fusaro / DSM 804).